A 213-amino-acid chain; its full sequence is Protein-L-isoaspartate O-methyltransferase (213 aa).

The active site involves Ser60.

It belongs to the methyltransferase superfamily. L-isoaspartyl/D-aspartyl protein methyltransferase family.

The protein localises to the cytoplasm. The catalysed reaction is [protein]-L-isoaspartate + S-adenosyl-L-methionine = [protein]-L-isoaspartate alpha-methyl ester + S-adenosyl-L-homocysteine. Its function is as follows. Catalyzes the methyl esterification of L-isoaspartyl residues in peptides and proteins that result from spontaneous decomposition of normal L-aspartyl and L-asparaginyl residues. It plays a role in the repair and/or degradation of damaged proteins. The chain is Protein-L-isoaspartate O-methyltransferase from Roseobacter denitrificans (strain ATCC 33942 / OCh 114) (Erythrobacter sp. (strain OCh 114)).